Reading from the N-terminus, the 238-residue chain is Urease subunit alpha (238 aa).

Residues 1–102 form a urease gamma region; it reads MKLTPKELDK…LVTVHTPIEA (102 aa). A urease beta region spans residues 103 to 238; it reads NGKLVPGELF…DDNYVKTIKE (136 aa).

It in the N-terminal section; belongs to the urease gamma subunit family. This sequence in the C-terminal section; belongs to the urease beta subunit family. In terms of assembly, heterohexamer of 3 UreA (alpha) and 3 UreB (beta) subunits.

The protein resides in the cytoplasm. The enzyme catalyses urea + 2 H2O + H(+) = hydrogencarbonate + 2 NH4(+). It participates in nitrogen metabolism; urea degradation; CO(2) and NH(3) from urea (urease route): step 1/1. In Helicobacter pylori (strain P12), this protein is Urease subunit alpha.